The primary structure comprises 308 residues: Ribosomal RNA large subunit methyltransferase F (308 aa).

The protein belongs to the methyltransferase superfamily. METTL16/RlmF family.

It localises to the cytoplasm. It carries out the reaction adenosine(1618) in 23S rRNA + S-adenosyl-L-methionine = N(6)-methyladenosine(1618) in 23S rRNA + S-adenosyl-L-homocysteine + H(+). In terms of biological role, specifically methylates the adenine in position 1618 of 23S rRNA. The polypeptide is Ribosomal RNA large subunit methyltransferase F (Salmonella agona (strain SL483)).